Reading from the N-terminus, the 250-residue chain is Iron-sulfur assembly protein 1 (250 aa).

A disordered region spans residues Ala-54–Trp-89. Residues Ser-75–Trp-89 are compositionally biased toward low complexity. Residues Cys-178, Cys-242, and Cys-244 each contribute to the Fe cation site.

The protein belongs to the HesB/IscA family.

Its subcellular location is the mitochondrion matrix. Its function is as follows. Involved in the assembly of mitochondrial and cytoplasmic iron-sulfur proteins. Probably involved in the binding of an intermediate of Fe/S cluster assembly. The protein is Iron-sulfur assembly protein 1 (ISA1) of Saccharomyces cerevisiae (strain ATCC 204508 / S288c) (Baker's yeast).